The primary structure comprises 232 residues: Peptide deformylase (232 aa).

Fe cation contacts are provided by cysteine 135 and histidine 178. Glutamate 179 is an active-site residue. A Fe cation-binding site is contributed by histidine 182.

It belongs to the polypeptide deformylase family. Requires Fe(2+) as cofactor.

The catalysed reaction is N-terminal N-formyl-L-methionyl-[peptide] + H2O = N-terminal L-methionyl-[peptide] + formate. Removes the formyl group from the N-terminal Met of newly synthesized proteins. Requires at least a dipeptide for an efficient rate of reaction. N-terminal L-methionine is a prerequisite for activity but the enzyme has broad specificity at other positions. The sequence is that of Peptide deformylase from Deinococcus radiodurans (strain ATCC 13939 / DSM 20539 / JCM 16871 / CCUG 27074 / LMG 4051 / NBRC 15346 / NCIMB 9279 / VKM B-1422 / R1).